The sequence spans 302 residues: Nucleoside kinase (302 aa).

The substrate site is built by Asp-17, Gln-33, Gly-43, and Asn-47. Gln-109 lines the ATP pocket. Substrate contacts are provided by residues 111–113 (TFF) and Gln-163. Residues Asn-186 and 214 to 219 (TKGSKG) each bind ATP. Asp-247 provides a ligand contact to substrate. The Proton acceptor role is filled by Asp-247.

In terms of assembly, homodimer. The cofactor is Mg(2+). Mn(2+) serves as cofactor.

It carries out the reaction cytidine + ATP = CMP + ADP + H(+). The catalysed reaction is guanosine + ATP = GMP + ADP + H(+). The enzyme catalyses inosine + ATP = IMP + ADP + H(+). Its function is as follows. Catalyzes the phosphorylation of a wide range of nucleosides to yield nucleoside monophosphates. Shows the highest activity for inosine, guanosine and cytidine, but very poor kinase activity with adenosine, thymidine, uridine and xanthosine. ATP is the best phosphate donor, but can also use ITP and GTP. Shows extremely low activity with fructose-6-phosphate. In Methanocaldococcus jannaschii (strain ATCC 43067 / DSM 2661 / JAL-1 / JCM 10045 / NBRC 100440) (Methanococcus jannaschii), this protein is Nucleoside kinase.